We begin with the raw amino-acid sequence, 465 residues long: 6-phospho-beta-glucosidase GmuD (465 aa).

The active-site Proton donor is the Glu170. Catalysis depends on Glu368, which acts as the Nucleophile.

The protein belongs to the glycosyl hydrolase 1 family.

It catalyses the reaction 6-phospho-beta-D-glucosyl-(1-&gt;4)-D-glucose + H2O = D-glucose 6-phosphate + D-glucose. Phospho-beta-D-glucosidase that seems to be involved in the degradation of glucomannan. Is also capable of hydrolyzing aryl-phospho-beta-D-glucosides, although very weakly, and plays only a minor role, if any, in the degradation of these substrates in vivo. In Bacillus subtilis (strain 168), this protein is 6-phospho-beta-glucosidase GmuD (gmuD).